The chain runs to 227 residues: Probable GTP-binding protein EngB (227 aa).

The region spanning 13-188 (IGLEVAFAGR…AGVMGNWYEY (176 aa)) is the EngB-type G domain. GTP contacts are provided by residues 21–28 (GRSNAGKS), 48–52 (GRTQM), 67–70 (DLPG), 134–137 (TKAD), and 167–169 (FSA). The Mg(2+) site is built by Ser28 and Thr50.

It belongs to the TRAFAC class TrmE-Era-EngA-EngB-Septin-like GTPase superfamily. EngB GTPase family. It depends on Mg(2+) as a cofactor.

Necessary for normal cell division and for the maintenance of normal septation. This is Probable GTP-binding protein EngB from Psychrobacter cryohalolentis (strain ATCC BAA-1226 / DSM 17306 / VKM B-2378 / K5).